The following is a 340-amino-acid chain: Olfactory receptor 5T3 (340 aa).

The Extracellular segment spans residues 1 to 55 (MDSTFTGYNLYNLQVKTEMDKLSSGLDIYRNPLKNKTEVTMFILTGFTDDFELQV). N-linked (GlcNAc...) asparagine glycosylation occurs at asparagine 35. Residues 56–76 (FLFLLFFAIYLFTLIGNLGLV) traverse the membrane as a helical segment. The Cytoplasmic portion of the chain corresponds to 77–84 (VLVIEDSW). A helical transmembrane segment spans residues 85-105 (LHNPMYYFLSVLSFLDACYST). The Extracellular portion of the chain corresponds to 106 to 129 (VVTPKMLVNFLAKNKSISFIGCAT). A glycan (N-linked (GlcNAc...) asparagine) is linked at asparagine 119. Residues cysteine 127 and cysteine 219 are joined by a disulfide bond. Residues 130–150 (QMLLFVTFGTTECFLLAAMAY) traverse the membrane as a helical segment. The Cytoplasmic segment spans residues 151–169 (DHYVAIYNPLLYSVSMSPR). The chain crosses the membrane as a helical span at residues 170–190 (VYVPLITASYVAGILHATIHI). The Extracellular portion of the chain corresponds to 191–226 (VATFSLSFCGSNEIRHVFCDMPPLLAISCSDTHTNQ). A helical membrane pass occupies residues 227-247 (LLLFYFVGSIEIVTILIVLIS). Over 248-267 (CDFILLSILKMHSAKGRQKA) the chain is Cytoplasmic. The chain crosses the membrane as a helical span at residues 268-288 (FSTCGSHLTGVTIYHGTILVS). Topologically, residues 289–301 (YMRPSSSYASDHD) are extracellular. A helical membrane pass occupies residues 302 to 322 (IIVSIFYTIVIPKLNPIIYSL). Residues 323-340 (RNKEVKKAVKKMLKLVYK) are Cytoplasmic-facing.

The protein belongs to the G-protein coupled receptor 1 family.

The protein localises to the cell membrane. Odorant receptor. The polypeptide is Olfactory receptor 5T3 (OR5T3) (Homo sapiens (Human)).